Here is a 671-residue protein sequence, read N- to C-terminus: UvrABC system protein B (671 aa).

The 388-residue stretch at 25-412 folds into the Helicase ATP-binding domain; the sequence is EGIEAGLAHQ…AGRVVEQVVR (388 aa). 38–45 is a binding site for ATP; sequence GVTGSGKT. Residues 91-114 carry the Beta-hairpin motif; it reads YYDYYQPEAYVPSSDTFIEKDASI. Residues 429 to 582 enclose the Helicase C-terminal domain; it reads QVDDLLSEIT…QIAFNLANGI (154 aa). The disordered stretch occupies residues 601–623; it reads PGSRSKKRKGMAKAAEENARYEN. Residues 614–623 show a composition bias toward basic and acidic residues; it reads AAEENARYEN. One can recognise a UVR domain in the interval 632–667; sequence TKRIRQLEEKMYQLARDLEFEAAAQMRDEITKLRER.

It belongs to the UvrB family. Forms a heterotetramer with UvrA during the search for lesions. Interacts with UvrC in an incision complex.

Its subcellular location is the cytoplasm. The UvrABC repair system catalyzes the recognition and processing of DNA lesions. A damage recognition complex composed of 2 UvrA and 2 UvrB subunits scans DNA for abnormalities. Upon binding of the UvrA(2)B(2) complex to a putative damaged site, the DNA wraps around one UvrB monomer. DNA wrap is dependent on ATP binding by UvrB and probably causes local melting of the DNA helix, facilitating insertion of UvrB beta-hairpin between the DNA strands. Then UvrB probes one DNA strand for the presence of a lesion. If a lesion is found the UvrA subunits dissociate and the UvrB-DNA preincision complex is formed. This complex is subsequently bound by UvrC and the second UvrB is released. If no lesion is found, the DNA wraps around the other UvrB subunit that will check the other stand for damage. This is UvrABC system protein B from Pseudomonas fluorescens (strain ATCC BAA-477 / NRRL B-23932 / Pf-5).